A 950-amino-acid chain; its full sequence is Zinc finger CCCH domain-containing protein 3 (950 aa).

Disordered stretches follow at residues 32-106 (GNSS…HPEP), 127-182 (IKPP…TKVG), 201-220 (VVKS…RTVS), and 314-489 (SEKS…VLRK). Residues 56 to 74 (RPSRRGFSSHHGPSWRKKY) show a composition bias toward basic residues. Positions 76-96 (LVNQPVESSDPASDPAFQTSL) are enriched in polar residues. Residues 327–338 (PRTTLESGNKAT) are compositionally biased toward polar residues. Basic and acidic residues predominate over residues 344–360 (KTEKPQPKVDPEVRPEK). Positions 370–388 (SPSKYKWKASSPSASSSSS) are enriched in low complexity. Residues 402–412 (SQLSPVPSRPT) are compositionally biased toward polar residues. Serine 405 carries the post-translational modification Phosphoserine. Residues 438 to 449 (VKSRTKIIRRRG) are compositionally biased toward basic residues. Positions 460-470 (SPTTATTSKNH) are enriched in polar residues. C3H1-type zinc fingers lie at residues 662-690 (EKKR…HDPE), 694-717 (VCTR…HHVS), 718-744 (KEKM…HVYV), 745-772 (SRKA…HTLL), and 773-795 (CPDF…HRNQ). Residues 793–950 (RNQKRHGRRT…GKPLHIKPRL (158 aa)) form a disordered region. A compositionally biased stretch (polar residues) spans 828–838 (PTTTQRSVRQM). Over residues 839–849 (SSGLASGAEAP) the composition is skewed to low complexity. Serine 851 and serine 855 each carry phosphoserine. A compositionally biased stretch (low complexity) spans 857 to 888 (RVLASTSTLSSKATAASSPSPSPSTSSPAPSL). Residues 914-928 (SLHSSPSPGGQTETG) show a composition bias toward polar residues. Phosphoserine is present on residues serine 918, serine 920, and serine 934.

As to quaternary structure, interacts with SMAD1, SMAD3, SMAD4, CPSF2 and CPSF3.

The protein localises to the nucleus. Required for the export of polyadenylated mRNAs from the nucleus. Enhances ACVR1B-induced SMAD-dependent transcription. Binds to single-stranded DNA but not to double-stranded DNA in vitro. Involved in RNA cleavage. This chain is Zinc finger CCCH domain-containing protein 3 (Zc3h3), found in Mus musculus (Mouse).